The primary structure comprises 320 residues: D-alanine--D-alanine ligase (320 aa).

An ATP-grasp domain is found at 104–308 (KRVCLSHGVP…YEDLCVEILR (205 aa)). 134–189 (AAEFGMPLMLKAPHEGSTIGIAKVETAEGMQAGFDLCAKYDDVVLVEQFVKGRELT) provides a ligand contact to ATP. 3 residues coordinate Mg(2+): Asp-261, Glu-275, and Asn-277.

This sequence belongs to the D-alanine--D-alanine ligase family. Mg(2+) serves as cofactor. The cofactor is Mn(2+).

The protein localises to the cytoplasm. The enzyme catalyses 2 D-alanine + ATP = D-alanyl-D-alanine + ADP + phosphate + H(+). It participates in cell wall biogenesis; peptidoglycan biosynthesis. Its function is as follows. Cell wall formation. This Janthinobacterium sp. (strain Marseille) (Minibacterium massiliensis) protein is D-alanine--D-alanine ligase.